Here is a 346-residue protein sequence, read N- to C-terminus: Phosphoribosylformylglycinamidine cyclo-ligase (346 aa).

This sequence belongs to the AIR synthase family.

It localises to the cytoplasm. The enzyme catalyses 2-formamido-N(1)-(5-O-phospho-beta-D-ribosyl)acetamidine + ATP = 5-amino-1-(5-phospho-beta-D-ribosyl)imidazole + ADP + phosphate + H(+). It functions in the pathway purine metabolism; IMP biosynthesis via de novo pathway; 5-amino-1-(5-phospho-D-ribosyl)imidazole from N(2)-formyl-N(1)-(5-phospho-D-ribosyl)glycinamide: step 2/2. This Alteromonas mediterranea (strain DSM 17117 / CIP 110805 / LMG 28347 / Deep ecotype) protein is Phosphoribosylformylglycinamidine cyclo-ligase.